Reading from the N-terminus, the 112-residue chain is Putative pterin-4-alpha-carbinolamine dehydratase (112 aa).

It belongs to the pterin-4-alpha-carbinolamine dehydratase family.

It carries out the reaction (4aS,6R)-4a-hydroxy-L-erythro-5,6,7,8-tetrahydrobiopterin = (6R)-L-erythro-6,7-dihydrobiopterin + H2O. The polypeptide is Putative pterin-4-alpha-carbinolamine dehydratase (Shewanella woodyi (strain ATCC 51908 / MS32)).